Here is a 101-residue protein sequence, read N- to C-terminus: Glutaredoxin-1 (101 aa).

The Glutaredoxin domain maps to 5–101 (KDRVEKLIQT…GSLSKMIAAL (97 aa)). A disulfide bridge connects residues Cys-25 and Cys-28.

This sequence belongs to the glutaredoxin family.

The protein resides in the cytoplasm. The protein localises to the cytosol. In terms of biological role, multifunctional enzyme with glutathione-dependent oxidoreductase, glutathione peroxidase and glutathione S-transferase (GST) activity. The disulfide bond functions as an electron carrier in the glutathione-dependent synthesis of deoxyribonucleotides by the enzyme ribonucleotide reductase. In addition, it is also involved in reducing cytosolic protein- and non-protein-disulfides in a coupled system with glutathione reductase. May play a role in protection against oxidative stress caused by superoxide in vivo by regulating the redox state of the protein sulfhydryl groups. The polypeptide is Glutaredoxin-1 (Rhizophagus irregularis (strain DAOM 181602 / DAOM 197198 / MUCL 43194) (Arbuscular mycorrhizal fungus)).